We begin with the raw amino-acid sequence, 305 residues long: Dihydroorotate dehydrogenase B (NAD(+)), catalytic subunit (305 aa).

FMN contacts are provided by residues Ser-23 and Lys-47–Gly-48. Residues Lys-47 and Asn-71–Leu-75 contribute to the substrate site. Residues Asn-101 and Asn-129 each contribute to the FMN site. Substrate is bound at residue Asn-129. The active-site Nucleophile is the Cys-132. FMN contacts are provided by Lys-167 and Ile-193. Substrate is bound at residue Asn-194–Thr-195. FMN is bound by residues Gly-219, Gly-245 to Gly-246, and Gly-267 to Thr-268.

Belongs to the dihydroorotate dehydrogenase family. Type 1 subfamily. In terms of assembly, heterotetramer of 2 PyrK and 2 PyrD type B subunits. Requires FMN as cofactor.

Its subcellular location is the cytoplasm. The catalysed reaction is (S)-dihydroorotate + NAD(+) = orotate + NADH + H(+). It functions in the pathway pyrimidine metabolism; UMP biosynthesis via de novo pathway; orotate from (S)-dihydroorotate (NAD(+) route): step 1/1. Its function is as follows. Catalyzes the conversion of dihydroorotate to orotate with NAD(+) as electron acceptor. This Citrifermentans bemidjiense (strain ATCC BAA-1014 / DSM 16622 / JCM 12645 / Bem) (Geobacter bemidjiensis) protein is Dihydroorotate dehydrogenase B (NAD(+)), catalytic subunit (pyrD).